Consider the following 142-residue polypeptide: Large ribosomal subunit protein uL11 (142 aa).

Belongs to the universal ribosomal protein uL11 family. In terms of assembly, part of the ribosomal stalk of the 50S ribosomal subunit. Interacts with L10 and the large rRNA to form the base of the stalk. L10 forms an elongated spine to which L12 dimers bind in a sequential fashion forming a multimeric L10(L12)X complex. One or more lysine residues are methylated.

Its function is as follows. Forms part of the ribosomal stalk which helps the ribosome interact with GTP-bound translation factors. The protein is Large ribosomal subunit protein uL11 of Pelotomaculum thermopropionicum (strain DSM 13744 / JCM 10971 / SI).